Here is a 326-residue protein sequence, read N- to C-terminus: L-Ala--D-Glu endopeptidase (326 aa).

Positions 1–19 are cleaved as a signal peptide; it reads MKVLLSALLLLLFAFEPSA. Zn(2+) contacts are provided by histidine 204, aspartate 208, histidine 292, and histidine 294.

It belongs to the peptidase M23B family. It depends on Zn(2+) as a cofactor.

L-Ala--D-Glu endopeptidase involved in production of single L-alanine side chains from tetrapeptides in the spore cortex peptidoglycan. Therefore, is required for the endospore cortex maturation. This is L-Ala--D-Glu endopeptidase (lytH) from Bacillus subtilis (strain 168).